The following is a 167-amino-acid chain: Peptide deformylase (167 aa).

Residues Cys-91 and His-133 each coordinate Fe cation. Residue Glu-134 is part of the active site. His-137 provides a ligand contact to Fe cation.

The protein belongs to the polypeptide deformylase family. Fe(2+) serves as cofactor.

It carries out the reaction N-terminal N-formyl-L-methionyl-[peptide] + H2O = N-terminal L-methionyl-[peptide] + formate. In terms of biological role, removes the formyl group from the N-terminal Met of newly synthesized proteins. Requires at least a dipeptide for an efficient rate of reaction. N-terminal L-methionine is a prerequisite for activity but the enzyme has broad specificity at other positions. This is Peptide deformylase from Chromobacterium violaceum (strain ATCC 12472 / DSM 30191 / JCM 1249 / CCUG 213 / NBRC 12614 / NCIMB 9131 / NCTC 9757 / MK).